Reading from the N-terminus, the 345-residue chain is Phosphoribosylformylglycinamidine cyclo-ligase (345 aa).

Belongs to the AIR synthase family.

It localises to the cytoplasm. The enzyme catalyses 2-formamido-N(1)-(5-O-phospho-beta-D-ribosyl)acetamidine + ATP = 5-amino-1-(5-phospho-beta-D-ribosyl)imidazole + ADP + phosphate + H(+). It participates in purine metabolism; IMP biosynthesis via de novo pathway; 5-amino-1-(5-phospho-D-ribosyl)imidazole from N(2)-formyl-N(1)-(5-phospho-D-ribosyl)glycinamide: step 2/2. The chain is Phosphoribosylformylglycinamidine cyclo-ligase from Escherichia coli (strain 55989 / EAEC).